The primary structure comprises 385 residues: Fe-S cluster assembly protein DRE2 (385 aa).

The segment at 1–177 (MTSSINILLL…KKLNKNDMTI (177 aa)) is N-terminal SAM-like domain. The linker stretch occupies residues 178–240 (NVPQEIDNIT…NDLLKYNNHN (63 aa)). The segment at 200 to 226 (YFSSDDENSSDGSLSDNANEEEEDDDE) is disordered. Residues 217 to 226 (ANEEEEDDDE) are compositionally biased toward acidic residues. [2Fe-2S] cluster contacts are provided by cysteine 261, cysteine 275, cysteine 278, and cysteine 280. The segment at 261-280 (CELSLNGGKKRKKACKDCTC) is fe-S binding site A. [4Fe-4S] cluster is bound by residues cysteine 348, cysteine 351, cysteine 359, and cysteine 362. Short sequence motifs (cx2C motif) lie at residues 348 to 351 (CGSC) and 359 to 362 (CDGC). Residues 348–362 (CGSCALGDAFRCDGC) are fe-S binding site B.

This sequence belongs to the anamorsin family. Monomer. Interacts with TAH18. Interacts with MIA40. It depends on [2Fe-2S] cluster as a cofactor. [4Fe-4S] cluster serves as cofactor.

Its subcellular location is the cytoplasm. The protein resides in the mitochondrion intermembrane space. In terms of biological role, component of the cytosolic iron-sulfur (Fe-S) protein assembly (CIA) machinery required for the maturation of extramitochondrial Fe-S proteins. Part of an electron transfer chain functioning in an early step of cytosolic Fe-S biogenesis, facilitating the de novo assembly of a [4Fe-4S] cluster on the scaffold complex CFD1-NBP35. Electrons are transferred to DRE2 from NADPH via the FAD- and FMN-containing protein TAH18. TAH18-DRE2 are also required for the assembly of the diferric tyrosyl radical cofactor of ribonucleotide reductase (RNR), probably by providing electrons for reduction during radical cofactor maturation in the catalytic small subunit RNR2. The sequence is that of Fe-S cluster assembly protein DRE2 from Candida dubliniensis (strain CD36 / ATCC MYA-646 / CBS 7987 / NCPF 3949 / NRRL Y-17841) (Yeast).